Consider the following 257-residue polypeptide: Thiazole synthase (257 aa).

Lysine 97 serves as the catalytic Schiff-base intermediate with DXP. 1-deoxy-D-xylulose 5-phosphate-binding positions include glycine 158, 184 to 185, and 206 to 207; these read AG and NT.

The protein belongs to the ThiG family. Homotetramer. Forms heterodimers with either ThiH or ThiS.

Its subcellular location is the cytoplasm. It carries out the reaction [ThiS sulfur-carrier protein]-C-terminal-Gly-aminoethanethioate + 2-iminoacetate + 1-deoxy-D-xylulose 5-phosphate = [ThiS sulfur-carrier protein]-C-terminal Gly-Gly + 2-[(2R,5Z)-2-carboxy-4-methylthiazol-5(2H)-ylidene]ethyl phosphate + 2 H2O + H(+). It participates in cofactor biosynthesis; thiamine diphosphate biosynthesis. Functionally, catalyzes the rearrangement of 1-deoxy-D-xylulose 5-phosphate (DXP) to produce the thiazole phosphate moiety of thiamine. Sulfur is provided by the thiocarboxylate moiety of the carrier protein ThiS. In vitro, sulfur can be provided by H(2)S. This is Thiazole synthase from Desulforamulus reducens (strain ATCC BAA-1160 / DSM 100696 / MI-1) (Desulfotomaculum reducens).